Consider the following 394-residue polypeptide: Elongation factor Tu (394 aa).

The tr-type G domain occupies 10-204; the sequence is KPHVNIGTIG…AVDSYIPQPV (195 aa). The G1 stretch occupies residues 19-26; the sequence is GHVDHGKT. 19 to 26 lines the GTP pocket; that stretch reads GHVDHGKT. Residue Thr-26 participates in Mg(2+) binding. The interval 60–64 is G2; the sequence is GITIS. The interval 81-84 is G3; the sequence is DCPG. Residues 81–85 and 136–139 contribute to the GTP site; these read DCPGH and NKVD. The G4 stretch occupies residues 136 to 139; it reads NKVD. The segment at 174-176 is G5; the sequence is SAL.

It belongs to the TRAFAC class translation factor GTPase superfamily. Classic translation factor GTPase family. EF-Tu/EF-1A subfamily. Monomer.

It is found in the cytoplasm. The catalysed reaction is GTP + H2O = GDP + phosphate + H(+). In terms of biological role, GTP hydrolase that promotes the GTP-dependent binding of aminoacyl-tRNA to the A-site of ribosomes during protein biosynthesis. The protein is Elongation factor Tu of Rickettsia felis (strain ATCC VR-1525 / URRWXCal2) (Rickettsia azadi).